Here is a 1987-residue protein sequence, read N- to C-terminus: Transcription factor 20 (1987 aa).

Over residues 1 to 22 the composition is skewed to polar residues; sequence MQSFREQSSYHGNQQSYPQEVH. Disordered regions lie at residues 1–79, 96–432, 446–481, 502–816, and 844–891; these read MQSF…QGYQ, DTVA…GNVP, LSPT…DPGL, LLSD…GTAR, and PHWG…SLSE. Positions 51–74 are enriched in low complexity; that stretch reads TGSSSSGRRGTAAAAAAMASETSG. Residue R59 is modified to Omega-N-methylarginine. Over residues 121–142 the composition is skewed to polar residues; sequence QGSSFGNQYASEGHVSQFQAQH. A compositionally biased stretch (low complexity) spans 163-205; the sequence is SAQYQQQASSQQQQQQQQQQQQQQQQQQQQVQQLRQQLYQSHQ. Over residues 206–235 the composition is skewed to polar residues; it reads PLPQTTGQPASGSSHLQPMQRPSTLPSSAG. Over residues 248–277 the composition is skewed to low complexity; sequence QSSASSSSSSSFPSPQRFSQSGQSYDGSYS. A compositionally biased stretch (polar residues) spans 289–311; the sequence is VGSNAQAYGTQSNYSYQPQSMKN. K316 is covalently cross-linked (Glycyl lysine isopeptide (Lys-Gly) (interchain with G-Cter in SUMO2)). Over residues 322 to 354 the composition is skewed to low complexity; it reads QQGQQQQQQQPQPQQQQPQQQQQQQQQQQHPPQ. Residues 357–377 show a composition bias toward polar residues; that stretch reads MQYTNAATKMPLQSQVGQYNQ. Positions 396 to 416 are enriched in low complexity; the sequence is SNPSPAASVVQSPSCSSTPSP. Over residues 417 to 432 the composition is skewed to polar residues; that stretch reads LMQSGENLQCGQGNVP. Residues 446-456 show a composition bias toward low complexity; it reads LSPTPSMMPSP. S447 and S458 each carry phosphoserine. 3 stretches are compositionally biased toward polar residues: residues 526–537, 566–576, and 585–605; these read SCTNSEGSSQPE, LSGQSTSSDTT, and AGSS…TSPA. Phosphoserine is present on residues S567, S588, S603, and S612. The segment covering 618–627 has biased composition (polar residues); sequence TSLSSEGNTK. K631 carries the N6-acetyllysine modification. The span at 645–657 shows a compositional bias: basic and acidic residues; the sequence is RVEKSGGQDKGSQ. Positions 666–682 are enriched in polar residues; it reads RPPSNSGVKEISHTSLP. S669 carries the phosphoserine modification. The segment covering 693–715 has biased composition (low complexity); the sequence is GNKNGDNNSSNHNGEGNGPSSHS. Over residues 722–731 the composition is skewed to polar residues; it reads TGRTEPSKSP. Glycyl lysine isopeptide (Lys-Gly) (interchain with G-Cter in SUMO2) cross-links involve residues K739, K762, K777, K852, K861, and K873. Residues 761-777 are compositionally biased toward basic and acidic residues; it reads EKGDFGSHGERKGRNEK. Residue S900 is modified to Phosphoserine. Glycyl lysine isopeptide (Lys-Gly) (interchain with G-Cter in SUMO2) cross-links involve residues K949 and K951. The disordered stretch occupies residues 949–1065; the sequence is KLKSQSGQIK…GDPHHMNPHM (117 aa). K958 participates in a covalent cross-link: Glycyl lysine isopeptide (Lys-Gly) (interchain with G-Cter in SUMO1); alternate. Residue K958 forms a Glycyl lysine isopeptide (Lys-Gly) (interchain with G-Cter in SUMO2); alternate linkage. Positions 974 to 989 are enriched in basic and acidic residues; the sequence is KSGDHCHPTSIKHETY. K985 participates in a covalent cross-link: Glycyl lysine isopeptide (Lys-Gly) (interchain with G-Cter in SUMO2). 2 positions are modified to phosphoserine: S994 and S1033. A Glycyl lysine isopeptide (Lys-Gly) (interchain with G-Cter in SUMO2) cross-link involves residue K1043. R1052 carries the post-translational modification Omega-N-methylarginine. S1081 is subject to Phosphoserine. Glycyl lysine isopeptide (Lys-Gly) (interchain with G-Cter in SUMO2) cross-links involve residues K1114, K1126, K1165, K1201, K1206, K1211, K1238, K1259, K1295, and K1302. The disordered stretch occupies residues 1136-1372; it reads VIAAAQHRQE…SPAKTKILPP (237 aa). A compositionally biased stretch (basic and acidic residues) spans 1158 to 1170; it reads DRVRSPLKNDKDG. The segment at 1198–1219 is leucine-zipper; sequence LPAKSMELKHSSQKLQESCWDL. The Nuclear localization signal motif lies at 1282–1295; it reads RRRVRSFISPIPSK. Basic and acidic residues-rich tracts occupy residues 1305 to 1321 and 1332 to 1346; these read NADD…EGAD and HSQD…DSSK. A Phosphoserine modification is found at S1333. Residue K1337 forms a Glycyl lysine isopeptide (Lys-Gly) (interchain with G-Cter in SUMO2) linkage. S1363 carries the phosphoserine modification. K1366 is covalently cross-linked (Glycyl lysine isopeptide (Lys-Gly) (interchain with G-Cter in SUMO2)). Residue S1389 is modified to Phosphoserine. A disordered region spans residues 1415-1434; the sequence is SLKSGPPEGGTVATQEAEME. Glycyl lysine isopeptide (Lys-Gly) (interchain with G-Cter in SUMO2) cross-links involve residues K1417, K1437, K1456, and K1474. Residues 1446–1636 form a disordered region; it reads SVTNQESNVE…KQAVPIVEPQ (191 aa). Positions 1463–1479 are enriched in basic and acidic residues; sequence EEWRGSGDDKVKTEAHV. Polar residues predominate over residues 1481–1501; the sequence is TASTGKEPSGTMTSTASQKPG. A Glycyl lysine isopeptide (Lys-Gly) (interchain with G-Cter in SUMO2) cross-link involves residue K1538. At S1550 the chain carries Phosphoserine. A Glycyl lysine isopeptide (Lys-Gly) (interchain with G-Cter in SUMO2) cross-link involves residue K1552. The segment at residues 1565-1579 is a DNA-binding region (a.T hook); it reads GKKKGRPIGSVNKQK. Residues 1584-1594 show a composition bias toward pro residues; that stretch reads QPPPPPQPPQM. The Nuclear localization signal signature appears at 1604–1628; that stretch reads KPKKQRQRRERRKPGAQPRKRKTKQ. Basic residues predominate over residues 1606 to 1627; the sequence is KKQRQRRERRKPGAQPRKRKTK. K1641 is covalently cross-linked (Glycyl lysine isopeptide (Lys-Gly) (interchain with G-Cter in SUMO2)). Disordered stretches follow at residues 1685–1710 and 1760–1865; these read QTKL…SKVL and TLPK…GPEL. S1697 is subject to Phosphoserine. A phosphothreonine mark is found at T1699, T1790, and T1792. A Nuclear localization signal motif is present at residues 1812-1819; sequence RFKRRHRS. The segment covering 1850–1859 has biased composition (polar residues); it reads DTKPSVPTTS. Residues 1856 to 1892 form a C2HC pre-PHD-type; degenerate zinc finger; that stretch reads PTTSEGGPELELQIPELPLDSNEFWVHEGCILWANGI. The PHD-type zinc-finger motif lies at 1912–1960; sequence MKCSHCQEAGATLGCYNKGCSFRYHYPCAIDADCLLHEENFSVRCPKHK. The disordered stretch occupies residues 1966–1987; the sequence is PLPPLQNKTAKGSLSTEQSERG. Polar residues predominate over residues 1971 to 1987; it reads QNKTAKGSLSTEQSERG.

As to quaternary structure, homodimer. Interacts with RNF4 and JUN. Binds to the regulatory region of MMP3. In terms of tissue distribution, expressed in brain, lung, liver, kidney and testes.

It is found in the nucleus. In terms of biological role, transcriptional activator that binds to the regulatory region of MMP3 and thereby controls stromelysin expression. It stimulates the activity of various transcriptional activators such as JUN, SP1, PAX6 and ETS1, suggesting a function as a coactivator. The chain is Transcription factor 20 (Tcf20) from Mus musculus (Mouse).